The following is a 158-amino-acid chain: MSYLPSSFDSDADDLDEMPFLDKMIYHCKQQPLVPLGTLATTGAVLLAVLNVKNGNKRKAQIWFRWRVALQGFTLIALVAGSYIYGTNKNERESHEEQLRKKAKMREQLWIQELERRDEETKLRRQKAELARQKAKEMEQETSKLQQELKDLEERLKK.

The HIG1 domain maps to 5 to 96 (PSSFDSDADD…TNKNERESHE (92 aa)). 2 helical membrane-spanning segments follow: residues 32–52 (PLVP…VLNV) and 68–88 (VALQ…YGTN). The stretch at 88–158 (NKNERESHEE…LKDLEERLKK (71 aa)) forms a coiled coil. The tract at residues 128–158 (AELARQKAKEMEQETSKLQQELKDLEERLKK) is disordered.

It belongs to the RCF1 family. In terms of assembly, associates with the respiratory chain complex III/complex IV supercomplex.

It localises to the mitochondrion membrane. Its function is as follows. Cytochrome c oxidase subunit which plays a role in assembly of respiratory supercomplexes. The protein is Respiratory supercomplex factor 1, mitochondrial (RCF1) of Kluyveromyces lactis (strain ATCC 8585 / CBS 2359 / DSM 70799 / NBRC 1267 / NRRL Y-1140 / WM37) (Yeast).